A 319-amino-acid polypeptide reads, in one-letter code: rRNA adenine N-6-methyltransferase (319 aa).

The disordered stretch occupies residues 1 to 59 (MARAPRSPHPARSRETSRAHPPYGTRADRAPGRGRDRDRSPDSPGNTSSRDGGRSPDRA). Residues 26 to 41 (RADRAPGRGRDRDRSP) are compositionally biased toward basic and acidic residues. Positions 66, 68, 93, 114, 141, and 157 each coordinate S-adenosyl-L-methionine.

It belongs to the class I-like SAM-binding methyltransferase superfamily. rRNA adenine N(6)-methyltransferase family.

The catalysed reaction is adenosine(2085) in 23S rRNA + 2 S-adenosyl-L-methionine = N(6)-dimethyladenosine(2085) in 23S rRNA + 2 S-adenosyl-L-homocysteine + 2 H(+). Functionally, this protein produces a dimethylation of the adenine residue at position 2085 in 23S rRNA, resulting in reduced affinity between ribosomes and macrolide-lincosamide-streptogramin B antibiotics. The sequence is that of rRNA adenine N-6-methyltransferase (ermSF) from Streptomyces fradiae (Streptomyces roseoflavus).